A 432-amino-acid chain; its full sequence is Glutamyl-tRNA reductase (432 aa).

Substrate is bound by residues 49-52, Ser-107, 112-114, and Gln-118; these read TCNR and ETQ. The Nucleophile role is filled by Cys-50. NADP(+) is bound at residue 186-191; sequence GAGEMG.

Belongs to the glutamyl-tRNA reductase family. In terms of assembly, homodimer.

The enzyme catalyses (S)-4-amino-5-oxopentanoate + tRNA(Glu) + NADP(+) = L-glutamyl-tRNA(Glu) + NADPH + H(+). Its pathway is porphyrin-containing compound metabolism; protoporphyrin-IX biosynthesis; 5-aminolevulinate from L-glutamyl-tRNA(Glu): step 1/2. In terms of biological role, catalyzes the NADPH-dependent reduction of glutamyl-tRNA(Glu) to glutamate 1-semialdehyde (GSA). This is Glutamyl-tRNA reductase from Campylobacter jejuni subsp. jejuni serotype O:23/36 (strain 81-176).